Here is a 197-residue protein sequence, read N- to C-terminus: MILSDRDIIAALKSGRIKITPEPDLETQLGACSIDLHLGNTFMVFEHSRFSYIDPRQPQSIGDAMRTIVVPDGEPFIMQAGDFALASTREYIELADDLVGRLEGRSSIARLGITVHSTAALFEPGWAGTATMELSNLGRMAVALYPGMRICSFTFEQLSSPAMVPYRMKRGNKYAGQKDPKPSRLAEELSLEQLRGR.

105 to 110 contacts dCTP; the sequence is RSSIAR. Glutamate 133 functions as the Proton donor/acceptor in the catalytic mechanism. DCTP is bound by residues tyrosine 166 and glutamine 177. Positions 172–197 are disordered; that stretch reads NKYAGQKDPKPSRLAEELSLEQLRGR. Positions 176–187 are enriched in basic and acidic residues; that stretch reads GQKDPKPSRLAE.

Belongs to the dCTP deaminase family. In terms of assembly, homotrimer.

The enzyme catalyses dCTP + H2O + H(+) = dUTP + NH4(+). It participates in pyrimidine metabolism; dUMP biosynthesis; dUMP from dCTP (dUTP route): step 1/2. Its function is as follows. Catalyzes the deamination of dCTP to dUTP. The chain is dCTP deaminase from Thermomicrobium roseum (strain ATCC 27502 / DSM 5159 / P-2).